Consider the following 760-residue polypeptide: MRYNQFSYIPTSLERAAEELKELGFDLDLQKTAKANLESFLRKLFFHYPDSDYPLSHLIAKNDMDALSFFQSEQELSKEVFDLLALQVLGFIPGVDFTEADAFLDKLAFPIHFDETEIIKHIHHLLATRCKSGMTLIDDLVSQGMLTMDNDYHFFNGKSLATFDTSQLIREVVYVEAPLDTDQDGQLDLIKVNIIRPQSQKPLPTLMTPSPYHQGINEVANDKKLYRMEKELVVKKRRQITVEDRDFIPLETQPCKLPIGQNLESFSYINSYSLNDYFLARGFANIYVSGVGTAGSTGFMTSGDYAQIESFKAVIDWLNGRATAYTSHSKTHQVRADWANGLVCTTGKSYLGTMSTGLATTGVDGLAMIIAESAISSWYNYYRENGLVCSPGGYPGEDLDVLTELTYSRNLLAGDYLRHNDHYQELLNQQSQALDRQSGDYNQFWHDRNYLKNAHQIKCDVVYTHGLQDWNVKPRQVYEIFNALPSTINKHLFLHQGEHVYMHNWQSIDFRESMNALLCQKLLGLANDFSLPEMIWQDNTCPQNWQERKVFGTSTIKELDLGQELLLIDNHYGEDEFKAYGKDFRASKAALFKGKANQALIDILLEEDLPINGEIVLQLKVKSSENKGLLSAQILDYGKKKRLGDLPIALTQSSIDNGQNFSREPLKELPFREDSYRVISKGFMNLQNRNNLSSIETIPNNKWMTVRLPLQPTIYHLEKGDTLRVILYTTDFEHTVRDNSNYALTIDLSQSQLIVPIASN.

Active-site charge relay system residues include serine 349, aspartate 469, and histidine 499.

This sequence belongs to the peptidase S15 family. In terms of assembly, homodimer.

Its subcellular location is the cytoplasm. The enzyme catalyses Hydrolyzes Xaa-Pro-|- bonds to release unblocked, N-terminal dipeptides from substrates including Ala-Pro-|-p-nitroanilide and (sequentially) Tyr-Pro-|-Phe-Pro-|-Gly-Pro-|-Ile.. In terms of biological role, removes N-terminal dipeptides sequentially from polypeptides having unsubstituted N-termini provided that the penultimate residue is proline. The polypeptide is Xaa-Pro dipeptidyl-peptidase (Streptococcus pyogenes serotype M12 (strain MGAS9429)).